Reading from the N-terminus, the 512-residue chain is MVAKKPRVVVVGAGISGLAAAHRLCGAGGDRFEVAVVEAGDRVGGRILTSEFAGHRVEMGATWVQGVVGSPVYALARDAGALGEEEGRGLPYERMDGFPDRVLTVAEGGEVVDADTVAGPIEELYRGMMEAARAGEAGGGGGVEEYLRRGLRAYQAARSAGGGGGGGKELEEVDEALLAMHINRERTDTSADDLGDLDLTAEGEYRDFPGEHVTIPGGYSRVVERLAAALPPGTVRLGLRLRRLKWGGTPVRLHFADGAPPLTADHVILTVSLGVLKASLGNKDTAGVGAAAIAFDPPLPPFKREAVARLGFGVVNKLFMEVEAVAPSEPEDVAGVQPAAAGFPFLHMAFRGHVSKIPWWMRGTESICPVHAGSTVALAWFAGREAAHLESLPDDDVIRGAHATLDSFLPAAPRWRVRRIKRSGWATDPLFLGSYSYVAVGSSGDDLDRMAEPLPRGPDAAADERPPSPRLLFAGEATHRTHYSTTHAAYLSGVREANRLLQHYRGGANHTT.

FAD contacts are provided by glutamate 38 and arginine 46. The interval aspartate 448–arginine 470 is disordered. Glutamate 476 contributes to the FAD binding site.

The protein belongs to the flavin monoamine oxidase family. FAD is required as a cofactor.

Its subcellular location is the cytoplasm. It carries out the reaction spermine + O2 + H2O = 3-aminopropanal + spermidine + H2O2. The catalysed reaction is N(1)-acetylspermine + O2 + H2O = 3-acetamidopropanal + spermidine + H2O2. The enzyme catalyses norspermine + O2 + H2O = norspermidine + 3-aminopropanal + H2O2. It catalyses the reaction thermospermine + O2 + H2O = 3-aminopropanal + spermidine + H2O2. It functions in the pathway amine and polyamine degradation; spermine degradation. Its function is as follows. Flavoenzyme involved in polyamine back-conversion. Catalyzes the oxidation of the secondary amino group of polyamines, such as spermine and its acetyl derivatives. Substrate preference is thermospermine &gt; spermine &gt; norspermine &gt; N(1)-acetylspermine. No activity detected when putrescine or spermidine are used as substrates. Plays an important role in the regulation of polyamine intracellular concentration. This is Polyamine oxidase 1 from Oryza sativa subsp. japonica (Rice).